The primary structure comprises 1239 residues: DNA topoisomerase 2 (1239 aa).

ATP is bound by residues N65, N96, 124–126, 137–144, and 354–356; these read SSN, GRHGYGAK, and QSK. The region spanning 434 to 548 is the Toprim domain; it reads RTLIVTEGDS…SLLQHNPGYI (115 aa). Residues E440, D517, and D519 each coordinate Mg(2+). Residues 685–1101 enclose the Topo IIA-type catalytic domain; the sequence is IPHCVDGLKP…TPVKMWLTDL (417 aa). Catalysis depends on Y775, which acts as the O-(5'-phospho-DNA)-tyrosine intermediate. The interaction with DNA stretch occupies residues 956–965; it reads ALSQRIYING. Residues 1167-1206 are disordered; the sequence is PASKRKPEDTYGGALSSGGSTRNVGKRLTGARGAKKKKVV.

This sequence belongs to the type II topoisomerase family. Homodimer. It depends on Mg(2+) as a cofactor. Requires Mn(2+) as cofactor. The cofactor is Ca(2+).

It is found in the nucleus. It localises to the mitochondrion matrix. Its subcellular location is the kinetoplast. It catalyses the reaction ATP-dependent breakage, passage and rejoining of double-stranded DNA.. Its function is as follows. Control of topological states of DNA by transient breakage and subsequent rejoining of DNA strands. Topoisomerase II makes double-strand breaks. The polypeptide is DNA topoisomerase 2 (TOP2) (Crithidia fasciculata).